Consider the following 94-residue polypeptide: Putative testis-specific prion protein (94 aa).

The signal sequence occupies residues 1-18 (MQHSLVFFFAVILHLSHL). Asn-44 is a glycosylation site (N-linked (GlcNAc...) asparagine).

As to expression, specifically expressed in adult testis.

The protein localises to the secreted. This is Putative testis-specific prion protein (PRNT) from Homo sapiens (Human).